The sequence spans 423 residues: SH2 domain-containing protein 5 (423 aa).

Residues 28–146 (AQYVGLLPCG…LLCRSFQLAY (119 aa)) form the PID domain. The region spanning 296–392 (WAFAGISRPC…LDMGRLNPTY (97 aa)) is the SH2 domain. The tract at residues 394 to 423 (EQDCGPLGRPPRTLRPLSHAKSEAELQGLG) is disordered. Positions 398-410 (GPLGRPPRTLRPL) are enriched in low complexity.

As to quaternary structure, interacts with BCR.

The protein resides in the postsynaptic density. May be involved in synaptic plasticity regulation through the control of Rac-GTP levels. The sequence is that of SH2 domain-containing protein 5 from Pongo abelii (Sumatran orangutan).